The chain runs to 189 residues: Large ribosomal subunit protein uL6 (189 aa).

This sequence belongs to the universal ribosomal protein uL6 family. Part of the 50S ribosomal subunit.

Functionally, this protein binds to the 23S rRNA, and is important in its secondary structure. It is located near the subunit interface in the base of the L7/L12 stalk, and near the tRNA binding site of the peptidyltransferase center. The sequence is that of Large ribosomal subunit protein uL6 from Microcystis aeruginosa (strain NIES-843 / IAM M-2473).